A 197-amino-acid polypeptide reads, in one-letter code: Imidazoleglycerol-phosphate dehydratase (197 aa).

It belongs to the imidazoleglycerol-phosphate dehydratase family.

Its subcellular location is the cytoplasm. It carries out the reaction D-erythro-1-(imidazol-4-yl)glycerol 3-phosphate = 3-(imidazol-4-yl)-2-oxopropyl phosphate + H2O. Its pathway is amino-acid biosynthesis; L-histidine biosynthesis; L-histidine from 5-phospho-alpha-D-ribose 1-diphosphate: step 6/9. The sequence is that of Imidazoleglycerol-phosphate dehydratase from Teredinibacter turnerae (strain ATCC 39867 / T7901).